The primary structure comprises 249 residues: Hydroxyacylglutathione hydrolase (249 aa).

Zn(2+) is bound by residues H54, H56, D58, H59, H113, D138, and H176.

It belongs to the metallo-beta-lactamase superfamily. Glyoxalase II family. In terms of assembly, monomer. Zn(2+) is required as a cofactor.

The enzyme catalyses an S-(2-hydroxyacyl)glutathione + H2O = a 2-hydroxy carboxylate + glutathione + H(+). Its pathway is secondary metabolite metabolism; methylglyoxal degradation; (R)-lactate from methylglyoxal: step 2/2. In terms of biological role, thiolesterase that catalyzes the hydrolysis of S-D-lactoyl-glutathione to form glutathione and D-lactic acid. This Synechococcus sp. (strain CC9605) protein is Hydroxyacylglutathione hydrolase.